The chain runs to 486 residues: Protein DETOXIFICATION 53 (486 aa).

12 helical membrane-spanning segments follow: residues 15–35 (CPIVMTSLLIFSRSIISMWFL), 45–65 (GGALAMGFGNITGVSVLKGLS), 94–114 (LLIVVSVPIAVTWLNIEPIFL), 130–150 (MLFFVPELLAQAMLHPLRTFL), 159–179 (LTISAIVSILLHPLFNYVFVV), 187–207 (GVAIAMAFNTMNIDVGLLVYT), 240–260 (AISVCLEYWWYEIMLFLCGLL), 267–287 (VAAMGILIQTTGILYVVPFAI), 312–332 (VIGLILAVAYGLAAAVFVTAL), 346–366 (ILGLISAALPILGLCEIGNSP), 386–406 (VNLCAFYIVGLPVAVTTTFGF), and 413–433 (LWFGLLSAQMTCLVMMLYTLI). A disordered region spans residues 448-474 (TSAAADKSHSEDETVHAEVQDDDDVSS). Over residues 453-466 (DKSHSEDETVHAEV) the composition is skewed to basic and acidic residues.

It belongs to the multi antimicrobial extrusion (MATE) (TC 2.A.66.1) family.

The protein resides in the membrane. The sequence is that of Protein DETOXIFICATION 53 from Arabidopsis thaliana (Mouse-ear cress).